Here is a 155-residue protein sequence, read N- to C-terminus: Archaemetzincin (155 aa).

His-109 provides a ligand contact to Zn(2+). Catalysis depends on Glu-110, which acts as the Proton acceptor. Residues His-113, His-119, Cys-120, Cys-125, Cys-144, and Cys-147 each coordinate Zn(2+).

Belongs to the peptidase M54 family. As to quaternary structure, monomer. The cofactor is Zn(2+).

In terms of biological role, probable zinc metalloprotease whose natural substrate is unknown. This chain is Archaemetzincin, found in Pyrobaculum aerophilum (strain ATCC 51768 / DSM 7523 / JCM 9630 / CIP 104966 / NBRC 100827 / IM2).